Here is a 262-residue protein sequence, read N- to C-terminus: Thiazole synthase (262 aa).

Lys97 acts as the Schiff-base intermediate with DXP in catalysis. 1-deoxy-D-xylulose 5-phosphate-binding positions include Gly158, 185–186 (AG), and 207–208 (NT). Residues 243–262 (DKAQASTPTVGQPFWHSAEY) form a disordered region.

Belongs to the ThiG family. As to quaternary structure, homotetramer. Forms heterodimers with either ThiH or ThiS.

The protein localises to the cytoplasm. It carries out the reaction [ThiS sulfur-carrier protein]-C-terminal-Gly-aminoethanethioate + 2-iminoacetate + 1-deoxy-D-xylulose 5-phosphate = [ThiS sulfur-carrier protein]-C-terminal Gly-Gly + 2-[(2R,5Z)-2-carboxy-4-methylthiazol-5(2H)-ylidene]ethyl phosphate + 2 H2O + H(+). It functions in the pathway cofactor biosynthesis; thiamine diphosphate biosynthesis. Functionally, catalyzes the rearrangement of 1-deoxy-D-xylulose 5-phosphate (DXP) to produce the thiazole phosphate moiety of thiamine. Sulfur is provided by the thiocarboxylate moiety of the carrier protein ThiS. In vitro, sulfur can be provided by H(2)S. This is Thiazole synthase from Neisseria meningitidis serogroup C (strain 053442).